The sequence spans 91 residues: Small ribosomal subunit protein bS20 (91 aa).

Belongs to the bacterial ribosomal protein bS20 family.

Binds directly to 16S ribosomal RNA. The sequence is that of Small ribosomal subunit protein bS20 from Caulobacter sp. (strain K31).